The chain runs to 489 residues: N-succinylglutamate 5-semialdehyde dehydrogenase (489 aa).

Residue 223–228 participates in NAD(+) binding; it reads GSSRTG. Active-site residues include Glu-246 and Cys-280.

The protein belongs to the aldehyde dehydrogenase family. AstD subfamily.

The enzyme catalyses N-succinyl-L-glutamate 5-semialdehyde + NAD(+) + H2O = N-succinyl-L-glutamate + NADH + 2 H(+). The protein operates within amino-acid degradation; L-arginine degradation via AST pathway; L-glutamate and succinate from L-arginine: step 4/5. Functionally, catalyzes the NAD-dependent reduction of succinylglutamate semialdehyde into succinylglutamate. The polypeptide is N-succinylglutamate 5-semialdehyde dehydrogenase (Aeromonas salmonicida (strain A449)).